A 401-amino-acid polypeptide reads, in one-letter code: Sodium/glutamate symporter (401 aa).

The Periplasmic segment spans residues 1-6; the sequence is MFHLDT. A helical transmembrane segment spans residues 7-24; it reads LATLVAATLTLLLGRKLV. Residues 25–32 are Cytoplasmic-facing; sequence HSVSFLKK. Residues 33-52 traverse the membrane as a helical segment; sequence YTIPEPVAGGLLVALALLVL. At 53–69 the chain is on the periplasmic side; that stretch reads KKSMGWEVNFDMSLRDP. Residues 70–87 form a helical membrane-spanning segment; that stretch reads LMLAFFATIGLNANIASL. The Cytoplasmic portion of the chain corresponds to 88-93; sequence RAGGRV. A helical transmembrane segment spans residues 94–116; the sequence is VGIFLIVVVGLLVMQNAIGIGMA. At 117 to 156 the chain is on the periplasmic side; sequence SLLGLDPLMGLLAGSITLSGGHGTGAAWSKLFIERYGFTN. The chain crosses the membrane as a helical span at residues 157-179; sequence ATEVAMACATFGLVLGGLIGGPV. Topologically, residues 180 to 212 are cytoplasmic; the sequence is ARYLVKHSTTPNGIPDDQEVPTAFEKPDVGRMI. The helical transmembrane segment at 213–235 threads the bilayer; the sequence is TSLVLIETIALIAICLTVGKIVA. At 236-244 the chain is on the periplasmic side; that stretch reads QLLAGTAFE. A helical membrane pass occupies residues 245 to 267; that stretch reads LPTFVCVLFVGVILSNGLSIMGF. The Cytoplasmic portion of the chain corresponds to 268-276; sequence YRVFERAVS. A helical transmembrane segment spans residues 277 to 292; it reads VLGNVSLSLFLAMALM. Topologically, residues 293-301 are periplasmic; it reads GLKLWELAS. Residues 302 to 324 form a helical membrane-spanning segment; the sequence is LALPMLAILVVQTIFMALYAIFV. Residues 325-367 are Cytoplasmic-facing; it reads TWRMMGKNYDAAVLAAGHCGFGLGATPTAIANMQAITERFGPS. A helical transmembrane segment spans residues 368 to 390; that stretch reads HMAFLVVPMVGAFFIDIVNALVI. Over 391–401 the chain is Periplasmic; the sequence is KLYLMLPIFAG.

It belongs to the glutamate:Na(+) symporter (ESS) (TC 2.A.27) family.

The protein resides in the cell inner membrane. Its activity is regulated as follows. Inhibited by the uncoupler carbonylcyanide m-chlorophenylhydrazone (CCCP) and the ionophore monensin. Catalyzes the sodium-dependent, binding-protein-independent transport of glutamate. This chain is Sodium/glutamate symporter, found in Escherichia coli (strain K12).